The chain runs to 394 residues: Xylose isomerase (394 aa).

Residues histidine 54 and aspartate 57 contribute to the active site. 7 residues coordinate Mg(2+): glutamate 181, glutamate 217, histidine 220, aspartate 245, aspartate 255, aspartate 257, and aspartate 292.

It belongs to the xylose isomerase family. In terms of assembly, homotetramer. The cofactor is Mg(2+).

The protein localises to the cytoplasm. The enzyme catalyses alpha-D-xylose = alpha-D-xylulofuranose. The chain is Xylose isomerase (xylA) from Actinoplanes missouriensis (strain ATCC 14538 / DSM 43046 / CBS 188.64 / JCM 3121 / NBRC 102363 / NCIMB 12654 / NRRL B-3342 / UNCC 431).